Here is a 343-residue protein sequence, read N- to C-terminus: 4-hydroxy-2-oxovalerate aldolase (343 aa).

Positions 4-254 constitute a Pyruvate carboxyltransferase domain; the sequence is PRLTDTTLRD…NPGLDVFSLM (251 aa). 12-13 contacts substrate; that stretch reads RD. Aspartate 13 contributes to the Mn(2+) binding site. Residue histidine 16 is the Proton acceptor of the active site. 2 residues coordinate substrate: serine 166 and histidine 193. 2 residues coordinate Mn(2+): histidine 193 and histidine 195. Tyrosine 284 is a substrate binding site.

Belongs to the 4-hydroxy-2-oxovalerate aldolase family.

The enzyme catalyses (S)-4-hydroxy-2-oxopentanoate = acetaldehyde + pyruvate. In Chloroflexus aurantiacus (strain ATCC 29364 / DSM 637 / Y-400-fl), this protein is 4-hydroxy-2-oxovalerate aldolase.